Here is a 1229-residue protein sequence, read N- to C-terminus: Alpha,alpha-trehalose-phosphate synthase [UDP-forming] 2 (1229 aa).

Residues valine 196–serine 233 form a disordered region. Residues threonine 213–alanine 225 are compositionally biased toward basic and acidic residues.

It in the N-terminal section; belongs to the glycosyltransferase 20 family. In the C-terminal section; belongs to the gob-1 trehalose phosphatase family.

The catalysed reaction is D-glucose 6-phosphate + UDP-alpha-D-glucose = alpha,alpha-trehalose 6-phosphate + UDP + H(+). Catalyzes the production of trehalose from glucose-6-phosphate and UDP-alpha-D-glucose in a 2 step process. The protein is Alpha,alpha-trehalose-phosphate synthase [UDP-forming] 2 (tps-2) of Caenorhabditis elegans.